The following is a 170-amino-acid chain: Ribosome maturation factor RimM (170 aa).

Residues 97 to 170 (NADEYYWVDL…LVVVDWDPEF (74 aa)) form the PRC barrel domain.

It belongs to the RimM family. As to quaternary structure, binds ribosomal protein uS19.

It localises to the cytoplasm. Its function is as follows. An accessory protein needed during the final step in the assembly of 30S ribosomal subunit, possibly for assembly of the head region. Essential for efficient processing of 16S rRNA. May be needed both before and after RbfA during the maturation of 16S rRNA. It has affinity for free ribosomal 30S subunits but not for 70S ribosomes. This chain is Ribosome maturation factor RimM, found in Stenotrophomonas maltophilia (strain R551-3).